The primary structure comprises 217 residues: Small ribosomal subunit protein uS3 (217 aa).

In terms of domain architecture, KH type-2 spans 38 to 106; the sequence is IRKFVQKELA…QVHINIIEIK (69 aa).

The protein belongs to the universal ribosomal protein uS3 family. In terms of assembly, part of the 30S ribosomal subunit. Forms a tight complex with proteins S10 and S14.

In terms of biological role, binds the lower part of the 30S subunit head. Binds mRNA in the 70S ribosome, positioning it for translation. This is Small ribosomal subunit protein uS3 from Streptococcus sanguinis (strain SK36).